The primary structure comprises 399 residues: Glucose-1-phosphate adenylyltransferase (399 aa).

Alpha-D-glucose 1-phosphate is bound by residues Tyr-100, Gly-165, 180–181 (EK), and Ser-191.

Belongs to the bacterial/plant glucose-1-phosphate adenylyltransferase family. Homotetramer.

It carries out the reaction alpha-D-glucose 1-phosphate + ATP + H(+) = ADP-alpha-D-glucose + diphosphate. It participates in glycan biosynthesis; glycogen biosynthesis. Functionally, involved in the biosynthesis of ADP-glucose, a building block required for the elongation reactions to produce glycogen. Catalyzes the reaction between ATP and alpha-D-glucose 1-phosphate (G1P) to produce pyrophosphate and ADP-Glc. This Desulforamulus reducens (strain ATCC BAA-1160 / DSM 100696 / MI-1) (Desulfotomaculum reducens) protein is Glucose-1-phosphate adenylyltransferase.